A 299-amino-acid chain; its full sequence is Taste receptor type 2 member 19 (299 aa).

A topological domain (extracellular) is located at residue Met-1. The helical transmembrane segment at 2-22 (MCFLLIILSILVVFAFVLGNF) threads the bilayer. Over 23-55 (SNGFIALVNVIDWVNTRKISSADQILTALVVSR) the chain is Cytoplasmic. The helical transmembrane segment at 56 to 76 (IGLLWVMLFLWYATVFNSALY) threads the bilayer. Residues 77–87 (GLEVRIVASNA) are Extracellular-facing. A helical membrane pass occupies residues 88 to 108 (WAVMNHFSIWLAASLSIFCLL). Residues 109–127 (KIANFSNLIFLHLKKRIKS) lie on the Cytoplasmic side of the membrane. A helical membrane pass occupies residues 128-148 (VVLVILLGPLVFLICNLAVIT). Residues 149 to 181 (MDERVWTKEYEGNVTWKIKLRNAIQLSSLTVTT) are Extracellular-facing. Residue Asn-161 is glycosylated (N-linked (GlcNAc...) asparagine). A helical membrane pass occupies residues 182-202 (LANLIPFTLSLICFLLLICSL). Over 203–226 (CKHLKKMRLHSKGSQDPSTKVHIK) the chain is Cytoplasmic. A helical membrane pass occupies residues 227-247 (ALQTVTSFLMLFAIYFLCIIT). Topologically, residues 248–259 (STWNLRTQQSKL) are extracellular. The helical transmembrane segment at 260-280 (VLLLCQTVAIMYPSFHSFILI) threads the bilayer. Over 281 to 299 (MGSRKLKQTFLSVLWQMTR) the chain is Cytoplasmic.

This sequence belongs to the G-protein coupled receptor T2R family.

Its subcellular location is the membrane. Its function is as follows. Receptor that may play a role in the perception of bitterness and is gustducin-linked. May play a role in sensing the chemical composition of the gastrointestinal content. The activity of this receptor may stimulate alpha gustducin, mediate PLC-beta-2 activation and lead to the gating of TRPM5. The chain is Taste receptor type 2 member 19 (TAS2R19) from Pan paniscus (Pygmy chimpanzee).